Consider the following 278-residue polypeptide: Checkpoint protein Hus1-like (278 aa).

Belongs to the HUS1 family. Component of the 9-1-1 checkpoint clamp complex consisting of Rad9 isoform A, Rad1 and Hus1-like; the interactions with Rad1 and Rad9 are direct. This complex probably also forms with Rad9 isoform B, however 9-1-1 complex containing Rad9 isoform A localizes to the nuclear periphery. Expressed in ovary.

Its subcellular location is the cytoplasm. The protein localises to the nucleus envelope. In terms of biological role, component of the 9-1-1 checkpoint clamp complex. Involved in both meiotic and somatic DNA damage responses. Essential for activation of the meiotic checkpoint in response to double-strand DNA breaks; required for the S-phase checkpoint but not the G2-M phase checkpoint. Involved in double strand break repair by homologous recombination during meiosis; influences the organization of chromosomal DNA in the meiotic nucleus. This chain is Checkpoint protein Hus1-like, found in Drosophila melanogaster (Fruit fly).